The following is a 213-amino-acid chain: dTTP/UTP pyrophosphatase (213 aa).

The Proton acceptor role is filled by aspartate 92.

Belongs to the Maf family. YhdE subfamily. The cofactor is a divalent metal cation.

It is found in the cytoplasm. It catalyses the reaction dTTP + H2O = dTMP + diphosphate + H(+). The catalysed reaction is UTP + H2O = UMP + diphosphate + H(+). Its function is as follows. Nucleoside triphosphate pyrophosphatase that hydrolyzes dTTP and UTP. May have a dual role in cell division arrest and in preventing the incorporation of modified nucleotides into cellular nucleic acids. The protein is dTTP/UTP pyrophosphatase of Granulibacter bethesdensis (strain ATCC BAA-1260 / CGDNIH1).